The chain runs to 508 residues: WD repeat-containing protein DDB_G0290555 (508 aa).

WD repeat units lie at residues 32 to 74 (TSEL…LIGE), 159 to 198 (NVAT…KTYS), 252 to 292 (FSKH…QVGS), and 295 to 334 (DSAG…MLHK). Residues 368–508 (ENKNRINNDD…KKFAGLKKRK (141 aa)) form a disordered region. A compositionally biased stretch (acidic residues) spans 399-435 (MDSDDDIEDGDDNDVEFPMEADSDDSDFDLGNSDDDN). Residues 436 to 446 (ISVKKENKGDS) show a composition bias toward basic and acidic residues. Residues 447-456 (DDSDDDSDED) are compositionally biased toward acidic residues. Residues 471-493 (NNNNNNNKGKNNKGKNNSSTKKT) show a composition bias toward low complexity. Residues 497–508 (LKKKFAGLKKRK) show a composition bias toward basic residues.

The protein is WD repeat-containing protein DDB_G0290555 of Dictyostelium discoideum (Social amoeba).